A 157-amino-acid polypeptide reads, in one-letter code: 2-C-methyl-D-erythritol 2,4-cyclodiphosphate synthase (157 aa).

2 residues coordinate a divalent metal cation: Asp-8 and His-10. 4-CDP-2-C-methyl-D-erythritol 2-phosphate-binding positions include Asp-8–His-10 and His-34–Ser-35. His-42 lines the a divalent metal cation pocket. Residues Asp-56–Gly-58, Phe-61–Asp-65, Ala-100–Ala-106, Thr-132–Glu-135, and Phe-139 each bind 4-CDP-2-C-methyl-D-erythritol 2-phosphate.

Belongs to the IspF family. As to quaternary structure, homotrimer. The cofactor is a divalent metal cation.

It carries out the reaction 4-CDP-2-C-methyl-D-erythritol 2-phosphate = 2-C-methyl-D-erythritol 2,4-cyclic diphosphate + CMP. The protein operates within isoprenoid biosynthesis; isopentenyl diphosphate biosynthesis via DXP pathway; isopentenyl diphosphate from 1-deoxy-D-xylulose 5-phosphate: step 4/6. Functionally, involved in the biosynthesis of isopentenyl diphosphate (IPP) and dimethylallyl diphosphate (DMAPP), two major building blocks of isoprenoid compounds. Catalyzes the conversion of 4-diphosphocytidyl-2-C-methyl-D-erythritol 2-phosphate (CDP-ME2P) to 2-C-methyl-D-erythritol 2,4-cyclodiphosphate (ME-CPP) with a corresponding release of cytidine 5-monophosphate (CMP). The polypeptide is 2-C-methyl-D-erythritol 2,4-cyclodiphosphate synthase (Clostridium novyi (strain NT)).